The sequence spans 239 residues: Protein G1-like8 (239 aa).

2 disordered regions span residues 1 to 35 (MEGG…RYES) and 149 to 239 (KARG…ATRV). A compositionally biased stretch (low complexity) spans 9-29 (DAQAQAQPVAQAPPAMQPMQQ). The 128-residue stretch at 32 to 159 (RYESQKRRDW…ARGIPYEKKK (128 aa)) folds into the ALOG domain. Positions 157–161 (KKKRK) match the Nuclear localization signal motif. Residues 167–178 (QPPPQPPLPPQH) show a composition bias toward pro residues. Composition is skewed to low complexity over residues 179 to 215 (QPGA…ATSQ) and 223 to 239 (TTTT…ATRV).

It belongs to the plant homeotic and developmental regulators ALOG protein family.

It is found in the nucleus. Its function is as follows. Probable transcription regulator that acts as a developmental regulator by promoting cell growth in response to light. The chain is Protein G1-like8 from Oryza sativa subsp. indica (Rice).